Consider the following 206-residue polypeptide: Ribosomal RNA large subunit methyltransferase E (206 aa).

The S-adenosyl-L-methionine site is built by Gly60, Trp62, Asp80, Asp96, and Asp121. Lys161 functions as the Proton acceptor in the catalytic mechanism.

It belongs to the class I-like SAM-binding methyltransferase superfamily. RNA methyltransferase RlmE family.

Its subcellular location is the cytoplasm. The enzyme catalyses uridine(2552) in 23S rRNA + S-adenosyl-L-methionine = 2'-O-methyluridine(2552) in 23S rRNA + S-adenosyl-L-homocysteine + H(+). In terms of biological role, specifically methylates the uridine in position 2552 of 23S rRNA at the 2'-O position of the ribose in the fully assembled 50S ribosomal subunit. This is Ribosomal RNA large subunit methyltransferase E from Stutzerimonas stutzeri (strain A1501) (Pseudomonas stutzeri).